The following is a 482-amino-acid chain: UDP-N-acetylmuramoyl-L-alanyl-D-glutamate--2,6-diaminopimelate ligase (482 aa).

Residue serine 24 participates in UDP-N-acetyl-alpha-D-muramoyl-L-alanyl-D-glutamate binding. Position 105-111 (105-111 (GTNGKTT)) interacts with ATP. Residues 147 to 148 (TT), serine 174, glutamine 180, and arginine 182 contribute to the UDP-N-acetyl-alpha-D-muramoyl-L-alanyl-D-glutamate site. Lysine 214 carries the post-translational modification N6-carboxylysine. Residues arginine 378, 402–405 (DNPR), glycine 453, and glutamate 457 each bind meso-2,6-diaminopimelate. The short motif at 402–405 (DNPR) is the Meso-diaminopimelate recognition motif element.

The protein belongs to the MurCDEF family. MurE subfamily. Mg(2+) serves as cofactor. In terms of processing, carboxylation is probably crucial for Mg(2+) binding and, consequently, for the gamma-phosphate positioning of ATP.

It localises to the cytoplasm. It carries out the reaction UDP-N-acetyl-alpha-D-muramoyl-L-alanyl-D-glutamate + meso-2,6-diaminopimelate + ATP = UDP-N-acetyl-alpha-D-muramoyl-L-alanyl-gamma-D-glutamyl-meso-2,6-diaminopimelate + ADP + phosphate + H(+). The protein operates within cell wall biogenesis; peptidoglycan biosynthesis. Its function is as follows. Catalyzes the addition of meso-diaminopimelic acid to the nucleotide precursor UDP-N-acetylmuramoyl-L-alanyl-D-glutamate (UMAG) in the biosynthesis of bacterial cell-wall peptidoglycan. The sequence is that of UDP-N-acetylmuramoyl-L-alanyl-D-glutamate--2,6-diaminopimelate ligase from Lawsonia intracellularis (strain PHE/MN1-00).